The primary structure comprises 195 residues: Putative archaetidylserine decarboxylase proenzyme (195 aa).

Ser-159 functions as the Schiff-base intermediate with substrate; via pyruvic acid in the catalytic mechanism. Ser-159 carries the pyruvic acid (Ser); by autocatalysis modification.

This sequence belongs to the phosphatidylserine decarboxylase family. PSD-A subfamily. As to quaternary structure, heterodimer of a large membrane-associated beta subunit and a small pyruvoyl-containing alpha subunit. It depends on pyruvate as a cofactor. In terms of processing, is synthesized initially as an inactive proenzyme. Formation of the active enzyme involves a self-maturation process in which the active site pyruvoyl group is generated from an internal serine residue via an autocatalytic post-translational modification. Two non-identical subunits are generated from the proenzyme in this reaction, and the pyruvate is formed at the N-terminus of the alpha chain, which is derived from the carboxyl end of the proenzyme. The autoendoproteolytic cleavage occurs by a canonical serine protease mechanism, in which the side chain hydroxyl group of the serine supplies its oxygen atom to form the C-terminus of the beta chain, while the remainder of the serine residue undergoes an oxidative deamination to produce ammonia and the pyruvoyl prosthetic group on the alpha chain. During this reaction, the Ser that is part of the protease active site of the proenzyme becomes the pyruvoyl prosthetic group, which constitutes an essential element of the active site of the mature decarboxylase. Is synthesized initially as an inactive proenzyme. Formation of the active enzyme involves a self-maturation process in which the active site pyruvoyl group is generated from an internal serine residue via an autocatalytic post-translational modification. Two non-identical subunits are generated from the proenzyme in this reaction, and the pyruvate is formed at the N-terminus of the alpha chain, which is derived from the carboxyl end of the proenzyme. The post-translation cleavage follows an unusual pathway, termed non-hydrolytic serinolysis, in which the side chain hydroxyl group of the serine supplies its oxygen atom to form the C-terminus of the beta chain, while the remainder of the serine residue undergoes an oxidative deamination to produce ammonia and the pyruvoyl prosthetic group on the alpha chain.

Its subcellular location is the cell membrane. It catalyses the reaction archaetidylserine + H(+) = archaetidylethanolamine + CO2. Functionally, catalyzes the formation of archaetidylethanolamine (PtdEtn) from archaetidylserine (PtdSer). This is Putative archaetidylserine decarboxylase proenzyme from Archaeoglobus fulgidus (strain ATCC 49558 / DSM 4304 / JCM 9628 / NBRC 100126 / VC-16).